Reading from the N-terminus, the 230-residue chain is UPF0173 metal-dependent hydrolase TM1040_1920 (230 aa).

Belongs to the UPF0173 family.

This is UPF0173 metal-dependent hydrolase TM1040_1920 from Ruegeria sp. (strain TM1040) (Silicibacter sp.).